A 211-amino-acid chain; its full sequence is Envelope protein UL45 homolog (211 aa).

The Intravirion segment spans residues 1-46 (MMSPTPEDDRDLVVVRGRLRMMDNGAEHDRERRSYTAWPHLCCGCT). Residues 47 to 67 (IGIILTMFVIATTLLLASLFA) traverse the membrane as a helical; Signal-anchor for type II membrane protein segment. Over 68–211 (FSYMSLESGT…SSILSNAIMK (144 aa)) the chain is Virion surface. N-linked (GlcNAc...) asparagine; by host glycans are attached at residues N96 and N133.

The protein belongs to the herpesviridae HHV-1 UL45 family.

Its subcellular location is the virion membrane. This chain is Envelope protein UL45 homolog (UL45H), found in Gallid herpesvirus 2 (strain bc-1) (GaHV-2).